We begin with the raw amino-acid sequence, 453 residues long: Exodeoxyribonuclease 7 large subunit (453 aa).

This sequence belongs to the XseA family. In terms of assembly, heterooligomer composed of large and small subunits.

The protein resides in the cytoplasm. It carries out the reaction Exonucleolytic cleavage in either 5'- to 3'- or 3'- to 5'-direction to yield nucleoside 5'-phosphates.. Bidirectionally degrades single-stranded DNA into large acid-insoluble oligonucleotides, which are then degraded further into small acid-soluble oligonucleotides. The chain is Exodeoxyribonuclease 7 large subunit from Geobacter metallireducens (strain ATCC 53774 / DSM 7210 / GS-15).